The following is a 540-amino-acid chain: ADP,ATP carrier protein 2 (540 aa).

The next 12 helical transmembrane spans lie at Phe-23–Leu-43, Val-61–Tyr-81, Val-93–Tyr-113, Leu-150–Val-170, Ala-185–Leu-205, Glu-222–Tyr-242, Leu-292–Val-312, Ile-334–Ile-354, Ile-361–Ile-381, Met-389–Val-409, Ser-455–Leu-475, and Ala-477–Gly-497.

This sequence belongs to the ADP/ATP translocase tlc family.

The protein resides in the cell membrane. The sequence is that of ADP,ATP carrier protein 2 (tlcB) from Chlamydia trachomatis serovar D (strain ATCC VR-885 / DSM 19411 / UW-3/Cx).